Consider the following 59-residue polypeptide: Large ribosomal subunit protein bL32 (59 aa).

A compositionally biased stretch (basic residues) spans 1–22; the sequence is MAVPKKKTSNSKRDSRRAHWNR. Positions 1-59 are disordered; it reads MAVPKKKTSNSKRDSRRAHWNRKANLAAQRALSTGKSILTGRAKGFEYPTKDDDEDDDE.

The protein belongs to the bacterial ribosomal protein bL32 family.

This chain is Large ribosomal subunit protein bL32, found in Acaryochloris marina (strain MBIC 11017).